The following is a 513-amino-acid chain: ATP synthase subunit alpha (513 aa).

169–176 lines the ATP pocket; it reads GDRQIGKT.

This sequence belongs to the ATPase alpha/beta chains family. In terms of assembly, F-type ATPases have 2 components, CF(1) - the catalytic core - and CF(0) - the membrane proton channel. CF(1) has five subunits: alpha(3), beta(3), gamma(1), delta(1), epsilon(1). CF(0) has three main subunits: a(1), b(2) and c(9-12). The alpha and beta chains form an alternating ring which encloses part of the gamma chain. CF(1) is attached to CF(0) by a central stalk formed by the gamma and epsilon chains, while a peripheral stalk is formed by the delta and b chains.

The protein resides in the cell inner membrane. The enzyme catalyses ATP + H2O + 4 H(+)(in) = ADP + phosphate + 5 H(+)(out). In terms of biological role, produces ATP from ADP in the presence of a proton gradient across the membrane. The alpha chain is a regulatory subunit. In Francisella tularensis subsp. holarctica (strain OSU18), this protein is ATP synthase subunit alpha.